The chain runs to 124 residues: Putative C(50) carotenoid beta-cyclase subunit A (124 aa).

Transmembrane regions (helical) follow at residues 1–21 (MIGL…LVID), 34–54 (AAAL…VLGV), and 78–98 (FEEV…AAGV).

It belongs to the lycopene beta-cyclase family. As to quaternary structure, may form a complex with LbtBC.

It localises to the cell membrane. The protein operates within carotenoid biosynthesis. Its function is as follows. Involved in the biosynthesis of C(50) beta-cyclic carotenoids. May have C(50) carotenoid beta-cyclase activity and produce the C(50) beta-cyclic carotenoid C.p.450 from the C(50) carotenoid dihydrobisanhydrobacterioruberin (DH-BABR). This is Putative C(50) carotenoid beta-cyclase subunit A from Dietzia sp. (strain CQ4).